Reading from the N-terminus, the 84-residue chain is Large ribosomal subunit protein bL27 (84 aa).

Residues Met1 to Leu21 form a disordered region.

This sequence belongs to the bacterial ribosomal protein bL27 family.

This is Large ribosomal subunit protein bL27 from Chlorobaculum parvum (strain DSM 263 / NCIMB 8327) (Chlorobium vibrioforme subsp. thiosulfatophilum).